The primary structure comprises 915 residues: Alpha-xylosidase 1 (915 aa).

Positions 1–27 (MASSSSSLAFSLSLLLALILCFSPTQS) are cleaved as a signal peptide. Asn153, Asn304, and Asn375 each carry an N-linked (GlcNAc...) asparagine glycan. Residues Asp440 and Glu443 contribute to the active site. Residues Asn476 and Asn490 are each glycosylated (N-linked (GlcNAc...) asparagine). The Proton donor role is filled by Asp563. N-linked (GlcNAc...) asparagine glycans are attached at residues Asn819, Asn888, and Asn907.

This sequence belongs to the glycosyl hydrolase 31 family. In terms of tissue distribution, expressed in roots, stems, leaves, flowers and siliques. Expressed in cell types undergoing cell wall modifications, including trichomes, vasculature, stomata, and elongating anther filaments. Not detected in pollen.

It localises to the secreted. The protein resides in the cell wall. Its subcellular location is the extracellular space. The protein localises to the apoplast. The enzyme catalyses Hydrolysis of terminal, non-reducing alpha-D-xylose residues with release of alpha-D-xylose.. In terms of biological role, glycoside hydrolase releasing xylosyl residues from xyloglucan oligosaccharides at the non-reducing end. Has alpha-xylosidase activity against xylan oligosaccharides. Also has alpha-glucosidase activity against p-nitrophenyl-alpha-D-glucopyranoside. No activity against p-nitrophenyl-D-xyloside. The chain is Alpha-xylosidase 1 from Arabidopsis thaliana (Mouse-ear cress).